The chain runs to 200 residues: Prolactin (200 aa).

3 cysteine pairs are disulfide-bonded: Cys-4-Cys-11, Cys-59-Cys-175, and Cys-192-Cys-200.

Belongs to the somatotropin/prolactin family. Pituitary gland.

It localises to the secreted. This Protopterus aethiopicus (Marbled lungfish) protein is Prolactin (prl).